The sequence spans 285 residues: Vesicle-associated membrane protein 725 (285 aa).

The Cytoplasmic portion of the chain corresponds to 1-261 (MDRSVVPISL…MWFENMKIKL (261 aa)). The Longin domain occupies 75 to 179 (FVARGTVILV…SLNREFGSKL (105 aa)). Positions 195–255 (KLAKVKAQVT…TKIRRKMWFE (61 aa)) constitute a v-SNARE coiled-coil homology domain. A helical; Anchor for type IV membrane protein transmembrane segment spans residues 262–282 (IVLGIIITLILIIILSVCGGF). The Vesicular segment spans residues 283–285 (KCT).

Belongs to the synaptobrevin family. As to expression, expressed in flowers, leaves, stems and roots.

The protein resides in the cell membrane. It is found in the early endosome membrane. Involved in the targeting and/or fusion of transport vesicles to their target membrane. The protein is Vesicle-associated membrane protein 725 of Arabidopsis thaliana (Mouse-ear cress).